The chain runs to 124 residues: Small ribosomal subunit protein uS13 (124 aa).

The disordered stretch occupies residues Gly95 to Lys124.

Belongs to the universal ribosomal protein uS13 family. Part of the 30S ribosomal subunit. Forms a loose heterodimer with protein S19. Forms two bridges to the 50S subunit in the 70S ribosome.

Functionally, located at the top of the head of the 30S subunit, it contacts several helices of the 16S rRNA. In the 70S ribosome it contacts the 23S rRNA (bridge B1a) and protein L5 of the 50S subunit (bridge B1b), connecting the 2 subunits; these bridges are implicated in subunit movement. Contacts the tRNAs in the A and P-sites. The polypeptide is Small ribosomal subunit protein uS13 (Rhodococcus jostii (strain RHA1)).